The sequence spans 161 residues: Hydrogenase expression/formation protein HoxO (161 aa).

The protein belongs to the HupG/HyaE family.

The chain is Hydrogenase expression/formation protein HoxO (hoxO) from Cupriavidus necator (strain ATCC 17699 / DSM 428 / KCTC 22496 / NCIMB 10442 / H16 / Stanier 337) (Ralstonia eutropha).